Here is a 200-residue protein sequence, read N- to C-terminus: Peptidyl-tRNA hydrolase (200 aa).

Y15 contributes to the tRNA binding site. The active-site Proton acceptor is H20. Y66, N68, and N114 together coordinate tRNA.

This sequence belongs to the PTH family. As to quaternary structure, monomer.

Its subcellular location is the cytoplasm. The enzyme catalyses an N-acyl-L-alpha-aminoacyl-tRNA + H2O = an N-acyl-L-amino acid + a tRNA + H(+). Its function is as follows. Hydrolyzes ribosome-free peptidyl-tRNAs (with 1 or more amino acids incorporated), which drop off the ribosome during protein synthesis, or as a result of ribosome stalling. Functionally, catalyzes the release of premature peptidyl moieties from peptidyl-tRNA molecules trapped in stalled 50S ribosomal subunits, and thus maintains levels of free tRNAs and 50S ribosomes. The chain is Peptidyl-tRNA hydrolase from Paraburkholderia xenovorans (strain LB400).